The primary structure comprises 203 residues: Urease accessory protein UreG (203 aa).

12–19 (GPVGSGKT) lines the GTP pocket.

It belongs to the SIMIBI class G3E GTPase family. UreG subfamily. Homodimer. UreD, UreF and UreG form a complex that acts as a GTP-hydrolysis-dependent molecular chaperone, activating the urease apoprotein by helping to assemble the nickel containing metallocenter of UreC. The UreE protein probably delivers the nickel.

The protein resides in the cytoplasm. Facilitates the functional incorporation of the urease nickel metallocenter. This process requires GTP hydrolysis, probably effectuated by UreG. This is Urease accessory protein UreG from Nitrosococcus oceani (strain ATCC 19707 / BCRC 17464 / JCM 30415 / NCIMB 11848 / C-107).